Reading from the N-terminus, the 65-residue chain is Large ribosomal subunit protein bL35 (65 aa).

The interval 1-25 (MPKMKSHRGAAKRFKKTGTGKLKRA) is disordered.

It belongs to the bacterial ribosomal protein bL35 family.

The chain is Large ribosomal subunit protein bL35 from Clostridium botulinum (strain Eklund 17B / Type B).